We begin with the raw amino-acid sequence, 415 residues long: Esterase FrsA (415 aa).

Belongs to the FrsA family.

It catalyses the reaction a carboxylic ester + H2O = an alcohol + a carboxylate + H(+). In terms of biological role, catalyzes the hydrolysis of esters. The chain is Esterase FrsA from Serratia proteamaculans (strain 568).